The sequence spans 69 residues: Alpha-conotoxin-like Tx1 (69 aa).

A signal peptide spans 1–21 (MGMRMMFVVFLLVVLASTVVS). The propeptide occupies 22-49 (STSGRRAFHGRNAAAKASGLVSLTDRRP). Cystine bridges form between Cys-51-Cys-57 and Cys-52-Cys-65. Residues 53-55 (SDP) form a ser-Xaa-Pro motif, crucial for potent interaction with nAChR region. At Gly-66 the chain carries Glycine amide.

The protein belongs to the conotoxin A superfamily. As to expression, expressed by the venom duct.

The protein resides in the secreted. Its function is as follows. Alpha-conotoxins act on postsynaptic membranes, they bind to the nicotinic acetylcholine receptors (nAChR) and thus inhibit them. The polypeptide is Alpha-conotoxin-like Tx1 (Conus textile (Cloth-of-gold cone)).